The primary structure comprises 159 residues: Ribosomal RNA large subunit methyltransferase H (159 aa).

S-adenosyl-L-methionine-binding positions include leucine 76, glycine 108, and 127 to 132; that span reads FGLLTF.

This sequence belongs to the RNA methyltransferase RlmH family. As to quaternary structure, homodimer.

Its subcellular location is the cytoplasm. The enzyme catalyses pseudouridine(1915) in 23S rRNA + S-adenosyl-L-methionine = N(3)-methylpseudouridine(1915) in 23S rRNA + S-adenosyl-L-homocysteine + H(+). Specifically methylates the pseudouridine at position 1915 (m3Psi1915) in 23S rRNA. This Streptococcus thermophilus (strain CNRZ 1066) protein is Ribosomal RNA large subunit methyltransferase H.